The primary structure comprises 301 residues: Homoserine O-acetyltransferase (301 aa).

Cys-142 serves as the catalytic Acyl-thioester intermediate. Substrate-binding residues include Lys-163 and Ser-192. His-235 serves as the catalytic Proton acceptor. Glu-237 is an active-site residue. Arg-249 serves as a coordination point for substrate.

It belongs to the MetA family.

It is found in the cytoplasm. The catalysed reaction is L-homoserine + acetyl-CoA = O-acetyl-L-homoserine + CoA. It functions in the pathway amino-acid biosynthesis; L-methionine biosynthesis via de novo pathway; O-acetyl-L-homoserine from L-homoserine: step 1/1. Its function is as follows. Transfers an acetyl group from acetyl-CoA to L-homoserine, forming acetyl-L-homoserine. The chain is Homoserine O-acetyltransferase from Bacillus subtilis (strain 168).